The following is a 434-amino-acid chain: Xylose isomerase (434 aa).

Catalysis depends on residues H99 and D102. The Mg(2+) site is built by E230, E266, H269, D294, D305, D307, and D337.

Belongs to the xylose isomerase family. In terms of assembly, homotetramer. The cofactor is Mg(2+).

The protein localises to the cytoplasm. It catalyses the reaction alpha-D-xylose = alpha-D-xylulofuranose. In Dinoroseobacter shibae (strain DSM 16493 / NCIMB 14021 / DFL 12), this protein is Xylose isomerase.